The following is a 167-amino-acid chain: Ubiquitin-fold modifier-conjugating enzyme 1 (167 aa).

The active-site Glycyl thioester intermediate is Cys-116. Lys-122 participates in a covalent cross-link: Glycyl lysine isopeptide (Lys-Gly) (interchain with G-Cter in UFM1).

This sequence belongs to the ubiquitin-conjugating enzyme family. UFC1 subfamily. As to quaternary structure, interacts with UBA5 (via C-terminus). Interacts with UFL1. Interacts with UFM1. Interacts with KIRREL3. Post-translationally, ufmylated at Lys-122. Deufmylated by UFSP1.

E2-like enzyme which specifically catalyzes the second step in ufmylation. Accepts the ubiquitin-like modifier UFM1 from the E1 enzyme UBA5 and forms an intermediate with UFM1 via a thioester linkage. Ufmylation is involved in various processes, such as ribosome recycling, response to DNA damage, interferon response or reticulophagy (also called ER-phagy). In Mus musculus (Mouse), this protein is Ubiquitin-fold modifier-conjugating enzyme 1.